A 159-amino-acid polypeptide reads, in one-letter code: 6,7-dimethyl-8-ribityllumazine synthase (159 aa).

5-amino-6-(D-ribitylamino)uracil is bound by residues Phe22, 57 to 59 (AVE), and 81 to 83 (AVI). 86-87 (GT) serves as a coordination point for (2S)-2-hydroxy-3-oxobutyl phosphate. The active-site Proton donor is the His89. Phe114 contributes to the 5-amino-6-(D-ribitylamino)uracil binding site. Arg128 is a binding site for (2S)-2-hydroxy-3-oxobutyl phosphate.

The protein belongs to the DMRL synthase family. As to quaternary structure, forms an icosahedral capsid composed of 60 subunits, arranged as a dodecamer of pentamers.

It carries out the reaction (2S)-2-hydroxy-3-oxobutyl phosphate + 5-amino-6-(D-ribitylamino)uracil = 6,7-dimethyl-8-(1-D-ribityl)lumazine + phosphate + 2 H2O + H(+). It participates in cofactor biosynthesis; riboflavin biosynthesis; riboflavin from 2-hydroxy-3-oxobutyl phosphate and 5-amino-6-(D-ribitylamino)uracil: step 1/2. In terms of biological role, catalyzes the formation of 6,7-dimethyl-8-ribityllumazine by condensation of 5-amino-6-(D-ribitylamino)uracil with 3,4-dihydroxy-2-butanone 4-phosphate. This is the penultimate step in the biosynthesis of riboflavin. In Shewanella denitrificans (strain OS217 / ATCC BAA-1090 / DSM 15013), this protein is 6,7-dimethyl-8-ribityllumazine synthase.